A 256-amino-acid polypeptide reads, in one-letter code: MNNEVFPNKFKAALAAHQVQIGCWSALANPISTEVLGLAGFDWLVLDGEHAPNDVTTLIPQLMALKGSISAPVVRVPTNEPVIIKRMLDIGFYNFLIPFVETKEQAINAVAATRYPPEGIRGVSVSHRANMFGTVPDYFVQSNKNITILVQIESQLGVDNVDAIAATEGVDGIFVGPSDLAAALGHLGNASHPQVQKAIQHIFARAKANGKPSGILAPVEADARRYLEWGATFVAVGSDLGVFRTGTQRLADSFKK.

Catalysis depends on histidine 50, which acts as the Proton acceptor. A substrate-binding site is contributed by glutamine 151. Glutamate 153 lines the Mg(2+) pocket. Serine 178 and aspartate 179 together coordinate substrate. Aspartate 179 provides a ligand contact to Mg(2+).

It belongs to the HpcH/HpaI aldolase family. KDGluc aldolase subfamily. In terms of assembly, homohexamer; trimer of dimers. Mg(2+) serves as cofactor.

It catalyses the reaction 5-dehydro-4-deoxy-D-glucarate = 2-hydroxy-3-oxopropanoate + pyruvate. The catalysed reaction is 2-dehydro-3-deoxy-D-glucarate = 2-hydroxy-3-oxopropanoate + pyruvate. It functions in the pathway carbohydrate acid metabolism; galactarate degradation; D-glycerate from galactarate: step 2/3. Catalyzes the reversible retro-aldol cleavage of both 5-keto-4-deoxy-D-glucarate and 2-keto-3-deoxy-D-glucarate to pyruvate and tartronic semialdehyde. The chain is 5-keto-4-deoxy-D-glucarate aldolase from Escherichia fergusonii (strain ATCC 35469 / DSM 13698 / CCUG 18766 / IAM 14443 / JCM 21226 / LMG 7866 / NBRC 102419 / NCTC 12128 / CDC 0568-73).